A 352-amino-acid chain; its full sequence is MRIVNENLCNNEISIVIGKGALSALEELKDKKVALFYSQKIDPSRVKSHLKSFIEIPIIDGEGAKDIQYALKLVKLLFENGFDRGDYVIALGGGTVTDVVGFVASIYMRGINLINIPTTLLGMVDAAIGGKTGVNFENVKNVLGTFYQPTMIISDLNFLETLPLEEIKKGLAEVIKYGLVLDKDLYDYLAMNKEKIFAKDESALEEIIYKSSVDKFSVVKADERETKGIRIVLNFGHTIGHAIEAGSNFTVPHGYAISVGMVCEAKMAEEVGYAEEGVVEDVTWILSQYELPLTVDSLNAKIDVKKAIDAITKDKKVRGGYVMMPFPTRIGDWKRVDVPIETLKGFAEQCLR.

NAD(+) contacts are provided by residues 60-65 (DGEGAK), 118-119 (TT), Lys131, Lys140, and 158-161 (FLET). Glu173, His237, and His253 together coordinate Zn(2+).

Belongs to the sugar phosphate cyclases superfamily. Dehydroquinate synthase family. Requires NAD(+) as cofactor. Co(2+) serves as cofactor. It depends on Zn(2+) as a cofactor.

The protein resides in the cytoplasm. The catalysed reaction is 7-phospho-2-dehydro-3-deoxy-D-arabino-heptonate = 3-dehydroquinate + phosphate. It participates in metabolic intermediate biosynthesis; chorismate biosynthesis; chorismate from D-erythrose 4-phosphate and phosphoenolpyruvate: step 2/7. In terms of biological role, catalyzes the conversion of 3-deoxy-D-arabino-heptulosonate 7-phosphate (DAHP) to dehydroquinate (DHQ). The chain is 3-dehydroquinate synthase from Sulfurisphaera tokodaii (strain DSM 16993 / JCM 10545 / NBRC 100140 / 7) (Sulfolobus tokodaii).